Here is a 190-residue protein sequence, read N- to C-terminus: Vascular endothelial growth factor A (190 aa).

A signal peptide spans 1–26; sequence MNFLLSWVHWSLALLLYLHHAKWSQA. 3 disulfide bridges follow: Cys51–Cys93, Cys82–Cys127, and Cys86–Cys129. Asn100 carries N-linked (GlcNAc...) asparagine glycosylation.

The protein belongs to the PDGF/VEGF growth factor family. In terms of assembly, homodimer; disulfide-linked. Also found as heterodimer with PGF. Interacts with NRP1. Interacts with isoform 2 of BSG. Interacts with CD82; this interaction inhibits VEGFA-mediated signaling pathway.

It is found in the secreted. Growth factor active in angiogenesis, vasculogenesis and endothelial cell growth. Induces endothelial cell proliferation, promotes cell migration, inhibits apoptosis and induces permeabilization of blood vessels. Binds to the FLT1/VEGFR1 and KDR/VEGFR2 receptors, heparan sulfate and heparin. Binding to NRP1 receptor initiates a signaling pathway needed for motor neuron axon guidance and cell body migration, including for the caudal migration of facial motor neurons from rhombomere 4 to rhombomere 6 during embryonic development. Also binds the DEAR/FBXW7-AS1 receptor. This Equus caballus (Horse) protein is Vascular endothelial growth factor A (VEGFA).